Here is a 130-residue protein sequence, read N- to C-terminus: HTH-type transcriptional regulator KmtR (130 aa).

The region spanning 10 to 104 is the HTH arsR-type domain; the sequence is LPDDQVCLVV…DAVFNAEHAG (95 aa). Residues 44–67 constitute a DNA-binding region (H-T-H motif); that stretch reads VNELAEQVGKPAPSVSQHLAKLRM. The disordered stretch occupies residues 110-130; sequence HHRAAGGLQSVAKASATKDVG.

Binding to DNA is inhibited by nickel and cobalt ions. In terms of biological role, represses expression of Rv2025c and its own expression. Acts by binding to the promoter regions. This chain is HTH-type transcriptional regulator KmtR (kmtR), found in Mycobacterium tuberculosis (strain ATCC 25618 / H37Rv).